Consider the following 360-residue polypeptide: MRLMKSYKNLKEEVWDTNRCSGCGACVAVCPVNNLYFREESPVKFECDECSCIIVPADIVEHPISAEFCKTVVYDVPCGACYDACPRIKKSAIPKPKGLGNILKAVRAKASIEIKNAQNGGVVTAILANAFDEGLIDGAIVMMDDKWTLEPESYLALSKEDVLKSAGSKYLWKGPILKALKTAVMEKKLKKLAVVGTPCVINAIYQILSSDNDLLKPFREAIRLKIALFCFETYDYSKMIKKLNEDGIEPWEVKKMDIESGKLKITLINGNTVEYKLKDVESAMRNGCKVCGDFTGLTSDISVGNVGTEKGYSTVLIRNKWGEGFFKRAVYNGYITYDENVDLEAVEKLVELKKKRVKKD.

Positions 11–40 (KEEVWDTNRCSGCGACVAVCPVNNLYFREE) constitute a 4Fe-4S ferredoxin-type domain.

It belongs to the FrhB family.

This is an uncharacterized protein from Methanocaldococcus jannaschii (strain ATCC 43067 / DSM 2661 / JAL-1 / JCM 10045 / NBRC 100440) (Methanococcus jannaschii).